The primary structure comprises 330 residues: tRNA uridine(34) hydroxylase (330 aa).

In terms of domain architecture, Rhodanese spans 123-217; sequence SDPEVILVDT…YLEEVKQEES (95 aa). The active-site Cysteine persulfide intermediate is the cysteine 177.

It belongs to the TrhO family.

The catalysed reaction is uridine(34) in tRNA + AH2 + O2 = 5-hydroxyuridine(34) in tRNA + A + H2O. Catalyzes oxygen-dependent 5-hydroxyuridine (ho5U) modification at position 34 in tRNAs. The sequence is that of tRNA uridine(34) hydroxylase from Shewanella sp. (strain MR-4).